The chain runs to 960 residues: Vacuolar membrane protease (960 aa).

Residues 1–57 (MADNNSSSGSLVIDEQDYDVHEAGQQGQQGQQKHQQRQQERPSLITRVFRSVFGYRK) are Cytoplasmic-facing. A disordered region spans residues 22–41 (EAGQQGQQGQQKHQQRQQER). The segment covering 24-33 (GQQGQQGQQK) has biased composition (low complexity). A helical transmembrane segment spans residues 58–78 (TSLSLFVVATIALCVSLSYID). The Vacuolar portion of the chain corresponds to 79 to 401 (NSVDFISFPT…FTISTSQLFK (323 aa)). N148 is a glycosylation site (N-linked (GlcNAc...) asparagine). Residues H189 and D201 each contribute to the Zn(2+) site. Residue E235 is the Proton acceptor of the active site. Zn(2+)-binding residues include E236, E261, and H333. A helical transmembrane segment spans residues 402–422 (INVALLTVFPILNGLLLLYTI). Over 423-432 (RSRKWQVSFS) the chain is Cytoplasmic. The chain crosses the membrane as a helical span at residues 433 to 453 (SAISIPVALLVTMFIVVYLVV). Residues 454-476 (ESYKSFNQYLPSSRPLLLVATIT) lie on the Vacuolar side of the membrane. A helical transmembrane segment spans residues 477–497 (SILLLVFSIILVAFSFFSIIA). At 498 to 502 (EENLR) the chain is on the cytoplasmic side. Residues 503 to 523 (LLAIVELSFAYWVGLAFTTHG) traverse the membrane as a helical segment. At 524–535 (LSGAESARHSGE) the chain is on the vacuolar side. A helical membrane pass occupies residues 536-556 (FAVSILFTLEAVASFLGLIGW). Residues 557–635 (SLCRNRSHLQ…FGYDWSLQYL (79 aa)) are Cytoplasmic-facing. Residues 587 to 605 (NDHDHEHRHGHEDNEHGEA) are compositionally biased toward basic and acidic residues. Residues 587–614 (NDHDHEHRHGHEDNEHGEAHVQQQSQSR) form a disordered region. Residues 636–656 (ITVPLSIFIIYNSGWLVLEGV) form a helical membrane-spanning segment. N657 is a glycosylation site (N-linked (GlcNAc...) asparagine). The Vacuolar segment spans residues 657-668 (NKTLQESAKAET). A helical membrane pass occupies residues 669–689 (FVYNLLWIVSVSLVLPLIPFA). Over 690–696 (GKLNRYM) the chain is Cytoplasmic. Residues 697 to 717 (VFVLIAIGVLGTLLVHVVQPF) form a helical membrane-spanning segment. At 718-960 (NEANPLKLRF…LVAYTKQVHV (243 aa)) the chain is on the vacuolar side. N736, N763, N803, N875, and N921 each carry an N-linked (GlcNAc...) asparagine glycan.

The protein belongs to the peptidase M28 family. It depends on Zn(2+) as a cofactor.

It localises to the vacuole membrane. Functionally, may be involved in vacuolar sorting and osmoregulation. This chain is Vacuolar membrane protease, found in Lodderomyces elongisporus (strain ATCC 11503 / CBS 2605 / JCM 1781 / NBRC 1676 / NRRL YB-4239) (Yeast).